Here is a 274-residue protein sequence, read N- to C-terminus: MSVQSAIRRRTAPDIRARKNGDPIVMLTSYHAHTAALVDRYCDVILVGDSLGNVMHGFETTVPVTLDMMILQGRAVMRGSQQALVVVDMPFGSYEASKEQAFHSAARLLKETLCGAVKLEGGVKMAETIAFLSARGIPVMGHVGLTPQSINTLGSFRAQGREEGTWQPIEDDARAVAEAGAFSMVIEAVAEPLARRITETVAIPTIGIGASPACDGQVLVLEDMLGLSPRAPKFVRRYGELGPMIEAAIEGYARDVRSRAFPGPEHVYAMKPKS.

Mg(2+) is bound by residues aspartate 49 and aspartate 88. Residues 49–50, aspartate 88, and lysine 118 each bind 3-methyl-2-oxobutanoate; that span reads DS. Glutamate 120 contacts Mg(2+). The active-site Proton acceptor is glutamate 187.

The protein belongs to the PanB family. In terms of assembly, homodecamer; pentamer of dimers. Requires Mg(2+) as cofactor.

The protein resides in the cytoplasm. It carries out the reaction 3-methyl-2-oxobutanoate + (6R)-5,10-methylene-5,6,7,8-tetrahydrofolate + H2O = 2-dehydropantoate + (6S)-5,6,7,8-tetrahydrofolate. It functions in the pathway cofactor biosynthesis; (R)-pantothenate biosynthesis; (R)-pantoate from 3-methyl-2-oxobutanoate: step 1/2. Functionally, catalyzes the reversible reaction in which hydroxymethyl group from 5,10-methylenetetrahydrofolate is transferred onto alpha-ketoisovalerate to form ketopantoate. The polypeptide is 3-methyl-2-oxobutanoate hydroxymethyltransferase (Nitrobacter winogradskyi (strain ATCC 25391 / DSM 10237 / CIP 104748 / NCIMB 11846 / Nb-255)).